The following is a 338-amino-acid chain: MSSSAPSTSAPTKIVIPDLVSHCTIPVRCNRHWKQASVESKRWLFRGGNLSDRKRDAFHGLKAGYLTSMCYPLAGYPQLRVSCDFMNYLFHLDNISDEMNDRGTHGTAVSVLDALYQPHMHPTSRVGKMTKDYWVRLIQTASPGAQQRFIETFDMFFQAVTQQAMDRANGVIPDLESYIAIRRDTSGCKPCWALIEYANNLDLPWEIMDHPIIRGLGEAANDLVTWSNDIFSYNVEQSKGDTHNMIVVVQNQQGLDLQSAVNFVGDLCKQSIDRFHYLRENLPSWGPELDREVEIYVDGLADWITGSLKWSFESERYFGKAGLEVKKTRVVALLPRRA.

Residues D93, N228, S232, and E236 each coordinate Mg(2+). The DDXXD motif motif lies at 93 to 97; sequence DNISD. Residues 228-236 carry the NSE/DTE motif motif; it reads NDIFSYNVE. (2E,6E)-farnesyl diphosphate contacts are provided by R316 and Y317.

Belongs to the terpene synthase family. The cofactor is Mg(2+).

The enzyme catalyses (2E,6E)-farnesyl diphosphate = alpha-copaene + diphosphate. It carries out the reaction (2E,6E)-farnesyl diphosphate = beta-copaene + diphosphate. The catalysed reaction is (2E,6E)-farnesyl diphosphate = alpha-muurolene + diphosphate. It catalyses the reaction (2E,6E)-farnesyl diphosphate = gamma-muurolene + diphosphate. The enzyme catalyses (2E,6E)-farnesyl diphosphate = delta-cadinene + diphosphate. Functionally, terpene cyclase that catalyzes the cyclization of farnesyl diphosphate (FPP) to various sesquiterpenes, including alpha-copaene, beta-copaene, beta-elemene, alpha-muurolene, gamma-muurolene and delta-cadinene. The chain is Sesquiterpene synthase 1 from Postia placenta (strain ATCC 44394 / Madison 698-R) (Brown rot fungus).